The chain runs to 613 residues: Probable Xaa-Pro aminopeptidase P (613 aa).

Mn(2+) contacts are provided by D408, D419, E517, and E531.

Belongs to the peptidase M24B family. The cofactor is Mn(2+).

It carries out the reaction Release of any N-terminal amino acid, including proline, that is linked to proline, even from a dipeptide or tripeptide.. Functionally, catalyzes the removal of a penultimate prolyl residue from the N-termini of peptides. This Penicillium rubens (strain ATCC 28089 / DSM 1075 / NRRL 1951 / Wisconsin 54-1255) (Penicillium chrysogenum) protein is Probable Xaa-Pro aminopeptidase P (ampp).